A 397-amino-acid chain; its full sequence is Argininosuccinate synthase (397 aa).

9–17 (AYSGGLDTS) contributes to the ATP binding site. Tyr-87 lines the L-citrulline pocket. Gly-117 is a binding site for ATP. L-aspartate contacts are provided by Thr-119, Asn-123, and Asp-124. Residue Asn-123 coordinates L-citrulline. L-citrulline contacts are provided by Arg-127, Ser-175, Ser-184, Glu-257, and Tyr-269.

This sequence belongs to the argininosuccinate synthase family. Type 1 subfamily. In terms of assembly, homotetramer.

The protein resides in the cytoplasm. The catalysed reaction is L-citrulline + L-aspartate + ATP = 2-(N(omega)-L-arginino)succinate + AMP + diphosphate + H(+). Its pathway is amino-acid biosynthesis; L-arginine biosynthesis; L-arginine from L-ornithine and carbamoyl phosphate: step 2/3. The protein is Argininosuccinate synthase of Dictyoglomus turgidum (strain DSM 6724 / Z-1310).